We begin with the raw amino-acid sequence, 449 residues long: Mannan endo-1,6-alpha-mannosidase DCW1 (449 aa).

A signal peptide spans 1–21 (MLVNKVIGLLGVLFATRFTNA). N-linked (GlcNAc...) asparagine glycans are attached at residues Asn34, Asn84, Asn109, Asn133, Asn203, Asn225, Asn240, Asn265, Asn281, Asn337, Asn362, and Asn420. Gly428 carries GPI-anchor amidated glycine lipidation. Positions 429 to 449 (AGIITAVIGISIVACALWLVF) are cleaved as a propeptide — removed in mature form.

The protein belongs to the glycosyl hydrolase 76 family.

It localises to the cell membrane. The catalysed reaction is Random hydrolysis of (1-&gt;6)-alpha-D-mannosidic linkages in unbranched (1-&gt;6)-mannans.. Functionally, required for normal synthesis of the cell wall. This chain is Mannan endo-1,6-alpha-mannosidase DCW1 (DCW1), found in Saccharomyces cerevisiae (strain ATCC 204508 / S288c) (Baker's yeast).